A 463-amino-acid chain; its full sequence is L-seryl-tRNA(Sec) selenium transferase (463 aa).

N6-(pyridoxal phosphate)lysine is present on lysine 295.

This sequence belongs to the SelA family. Homodecamer; pentamer of dimers. Binds only one seryl-tRNA(Sec) per dimer. Pyridoxal 5'-phosphate is required as a cofactor.

Its subcellular location is the cytoplasm. It carries out the reaction L-seryl-tRNA(Sec) + selenophosphate + H(+) = L-selenocysteinyl-tRNA(Sec) + phosphate. The protein operates within aminoacyl-tRNA biosynthesis; selenocysteinyl-tRNA(Sec) biosynthesis; selenocysteinyl-tRNA(Sec) from L-seryl-tRNA(Sec) (bacterial route): step 1/1. Its function is as follows. Converts seryl-tRNA(Sec) to selenocysteinyl-tRNA(Sec) required for selenoprotein biosynthesis. In Shigella sonnei (strain Ss046), this protein is L-seryl-tRNA(Sec) selenium transferase.